Reading from the N-terminus, the 123-residue chain is uncharacterized protein (123 aa).

Residues 14–34 (VVLKITAVVCSVFSIRVLILA) form a helical membrane-spanning segment.

Its subcellular location is the membrane. This is an uncharacterized protein from Saccharomyces cerevisiae (strain ATCC 204508 / S288c) (Baker's yeast).